The sequence spans 136 residues: Small ribosomal subunit protein uS9 (136 aa).

Residues 97-136 (SPDNRKPLKTEGHLSRDPRAKERRKYGLKKARKAPQFSKR) are disordered. The segment covering 98–116 (PDNRKPLKTEGHLSRDPRA) has biased composition (basic and acidic residues). Basic residues predominate over residues 117–136 (KERRKYGLKKARKAPQFSKR).

Belongs to the universal ribosomal protein uS9 family.

This is Small ribosomal subunit protein uS9 from Prochlorococcus marinus (strain MIT 9215).